A 321-amino-acid polypeptide reads, in one-letter code: tRNA U34 carboxymethyltransferase (321 aa).

Residues K90, W104, K109, G129, 151-153, 180-181, M195, Y199, and R314 each bind carboxy-S-adenosyl-L-methionine; these read DPT and IE.

This sequence belongs to the class I-like SAM-binding methyltransferase superfamily. CmoB family. Homotetramer.

The enzyme catalyses carboxy-S-adenosyl-L-methionine + 5-hydroxyuridine(34) in tRNA = 5-carboxymethoxyuridine(34) in tRNA + S-adenosyl-L-homocysteine + H(+). Catalyzes carboxymethyl transfer from carboxy-S-adenosyl-L-methionine (Cx-SAM) to 5-hydroxyuridine (ho5U) to form 5-carboxymethoxyuridine (cmo5U) at position 34 in tRNAs. This chain is tRNA U34 carboxymethyltransferase, found in Haemophilus influenzae (strain PittGG).